A 204-amino-acid polypeptide reads, in one-letter code: Small ribosomal subunit protein eS8 (204 aa).

Belongs to the eukaryotic ribosomal protein eS8 family.

This is Small ribosomal subunit protein eS8 (RPS8) from Griffithsia japonica (Red alga).